The chain runs to 179 residues: Probable chorismate pyruvate-lyase (179 aa).

Positions 82, 120, and 165 each coordinate substrate.

It belongs to the UbiC family.

The protein localises to the cytoplasm. The catalysed reaction is chorismate = 4-hydroxybenzoate + pyruvate. It functions in the pathway cofactor biosynthesis; ubiquinone biosynthesis. Its function is as follows. Removes the pyruvyl group from chorismate, with concomitant aromatization of the ring, to provide 4-hydroxybenzoate (4HB) for the ubiquinone pathway. The polypeptide is Probable chorismate pyruvate-lyase (Vibrio vulnificus (strain YJ016)).